Consider the following 201-residue polypeptide: Esterase TesA (201 aa).

A signal peptide spans 1 to 21 (MRALLLSGCLALVLLTQQAAA). The active-site Nucleophile is the Ser30. Active-site residues include Asp177 and His180.

Belongs to the 'GDSL' lipolytic enzyme family.

The protein localises to the secreted. The enzyme catalyses a carboxylic ester + H2O = an alcohol + a carboxylate + H(+). Functionally, esterase that exhibits the highest activity towards Tween detergents and p-nitrophenyl esters of short acyl chain length. Also displays a low thioesterase activity towards palmitoyl-coenzyme A, but is not active towards acetyl-coenzyme A. This chain is Esterase TesA (tesA), found in Pseudomonas aeruginosa (strain ATCC 15692 / DSM 22644 / CIP 104116 / JCM 14847 / LMG 12228 / 1C / PRS 101 / PAO1).